A 372-amino-acid polypeptide reads, in one-letter code: Glutamate 5-kinase (372 aa).

Lysine 14 lines the ATP pocket. Serine 54, aspartate 141, and asparagine 153 together coordinate substrate. 173–174 contacts ATP; the sequence is TD. Positions 280–358 constitute a PUA domain; it reads RGTVVIDDGA…SQIESLLGYS (79 aa).

This sequence belongs to the glutamate 5-kinase family.

It localises to the cytoplasm. It carries out the reaction L-glutamate + ATP = L-glutamyl 5-phosphate + ADP. It functions in the pathway amino-acid biosynthesis; L-proline biosynthesis; L-glutamate 5-semialdehyde from L-glutamate: step 1/2. In terms of biological role, catalyzes the transfer of a phosphate group to glutamate to form L-glutamate 5-phosphate. This chain is Glutamate 5-kinase, found in Methylibium petroleiphilum (strain ATCC BAA-1232 / LMG 22953 / PM1).